An 807-amino-acid chain; its full sequence is cAMP-regulated phosphoprotein 21 (807 aa).

Positions 1–127 (MSEQGGLTPT…KNREKLSERP (127 aa)) are disordered. At Ser-2 the chain carries N-acetylserine. The residue at position 32 (Ser-32) is a Phosphoserine. Residues 32-57 (SLDEEEKLELQRRLAAQNQERRKSKS) adopt a coiled-coil conformation. Ser-55 is subject to Phosphoserine; by PKA. Residues 89–98 (IHLQLSSFPS) are compositionally biased toward polar residues. A compositionally biased stretch (basic and acidic residues) spans 101–127 (EEDKSRKDDSEREKEKDKNREKLSERP). Ser-133 is subject to Phosphoserine. The region spanning 163-226 (RMILLKMEQE…SVIINKTSST (64 aa)) is the R3H domain. In terms of domain architecture, SUZ spans 227 to 298 (RIPEQRFCEH…VRERIFAHDS (72 aa)). Positions 245-282 (SQKRFILKRDNSSIDKEDNQNRMHPFRDDRRSKSIEER) are disordered. Phosphoserine occurs at positions 265 and 298. 4 disordered regions span residues 328–434 (LFRA…TSSV), 474–536 (GSIL…QPQM), 552–576 (SQLS…YPAS), and 595–627 (QLST…QQPP). Positions 337-348 (GRTSGSRQSSSE) are enriched in low complexity. Residues 349–358 (TELRWPDHQR) show a composition bias toward basic and acidic residues. Over residues 359–380 (AWSSTDSDSSNRNLKPTMTKTA) the composition is skewed to polar residues. Ser-361 and Ser-381 each carry phosphoserine. The span at 401 to 421 (GKLSKTGSESSSSAGSSGSLS) shows a compositional bias: low complexity. The segment covering 422 to 434 (RTHPQSTALTSSV) has biased composition (polar residues). The span at 514 to 524 (QQPPQQQPSPQ) shows a compositional bias: pro residues. Residues 525 to 535 (PQQQVQASQPQ) are compositionally biased toward low complexity. Composition is skewed to polar residues over residues 552–563 (SQLSMSRQSSGD) and 595–613 (QLST…QQVL). Ser-557 bears the Phosphoserine mark. An Asymmetric dimethylarginine modification is found at Arg-650.

As to quaternary structure, interacts with CALM1. Phosphorylation of isoform 2 at Ser-55 is enhanced upon dopamine D1 receptor activation and favors interaction with CALM1. Post-translationally, methylated by CARM1 at Arg-650 in immature thymocytes. In terms of tissue distribution, present at high levels in thymus and low levels in brain. In thymus, isoform 1 is specifically found in immature thymocytes (at protein level).

It localises to the cytoplasm. May act as a competitive inhibitor of calmodulin-dependent enzymes such as calcineurin in neurons. This is cAMP-regulated phosphoprotein 21 (Arpp21) from Mus musculus (Mouse).